The following is a 323-amino-acid chain: Aldo-keto reductase family 1 member C21 (323 aa).

20–24 contacts NADP(+); it reads GFGTA. Lys-31 is a binding site for substrate. Asp-50 is an NADP(+) binding site. Residue Tyr-55 is the Proton donor of the active site. His-117 provides a ligand contact to substrate. Residues 166–167, Gln-190, 216–224, and 270–280 each bind NADP(+); these read SN, YGVLGTQRY, and TSLKEERIKEN.

The protein belongs to the aldo/keto reductase family. In terms of assembly, monomer. Detected in kidney and brain.

Its subcellular location is the cytoplasm. The catalysed reaction is androsterone + NADP(+) = 5alpha-androstan-3,17-dione + NADPH + H(+). The enzyme catalyses androsterone + NAD(+) = 5alpha-androstan-3,17-dione + NADH + H(+). Its activity is regulated as follows. Inhibited by high concentrations of substrate. NADP-dependent 17-alpha-hydroxysteroid dehydrogenase that converts 5-alpha-androstane-3,17-dione into androsterone. Has lower 3-alpha-hydroxysteroid dehydrogenase activity. Has broad substrate specificity and acts on various 17-alpha-hydroxysteroids, 17-ketosteroids, 3-alpha hydroxysteroids and 3-ketosteroids. Reduction of keto groups is strictly stereoselective. Reduction of 17-ketosteroids yields only 17-alpha-hydroxysteroids. Likewise, reduction of 3-ketosteroids yields only 3-alpha-hydroxysteroids. The chain is Aldo-keto reductase family 1 member C21 (Akr1c21) from Mus musculus (Mouse).